The following is a 285-amino-acid chain: MVKIGAHVSSSKSLDLVFDRGREIGADTIQFFLSSPRSWHWKERSDEEKELFIQKRRETGISPVIAHSSYLFNLASSDPVLRKKSINGVIRELKLCEELKIDYYVIHAGKSKGLKESEAVKNIIDSVKEIFSKVKLKHTFFLYETLAGQKGEIGKTTDELAQLMEPFKKENTGVCVDTCHIYSAGYKINDEEGFYSYRSELSKKIGLENVKVIHCNDSKTPFNSKRDRHEHIGEGSIGYKGFEFFLNDEYFRRLPFILETPKTADWDIKNMERLRRLIRTAPVAQ.

Histidine 67, histidine 107, glutamate 144, aspartate 177, histidine 180, histidine 214, aspartate 227, histidine 229, and glutamate 259 together coordinate Zn(2+).

It belongs to the AP endonuclease 2 family. The cofactor is Zn(2+).

It carries out the reaction Endonucleolytic cleavage to 5'-phosphooligonucleotide end-products.. Its function is as follows. Endonuclease IV plays a role in DNA repair. It cleaves phosphodiester bonds at apurinic or apyrimidinic (AP) sites, generating a 3'-hydroxyl group and a 5'-terminal sugar phosphate. The polypeptide is Probable endonuclease 4 (Persephonella marina (strain DSM 14350 / EX-H1)).